The following is a 137-amino-acid chain: Small ribosomal subunit protein uS12 (137 aa).

Positions 1–23 (MPTINQLVRKGRKSKSSKSDAPA) are disordered. Aspartate 102 is modified (3-methylthioaspartic acid).

This sequence belongs to the universal ribosomal protein uS12 family. Part of the 30S ribosomal subunit. Contacts proteins S8 and S17. May interact with IF1 in the 30S initiation complex.

In terms of biological role, with S4 and S5 plays an important role in translational accuracy. Interacts with and stabilizes bases of the 16S rRNA that are involved in tRNA selection in the A site and with the mRNA backbone. Located at the interface of the 30S and 50S subunits, it traverses the body of the 30S subunit contacting proteins on the other side and probably holding the rRNA structure together. The combined cluster of proteins S8, S12 and S17 appears to hold together the shoulder and platform of the 30S subunit. In Levilactobacillus brevis (strain ATCC 367 / BCRC 12310 / CIP 105137 / JCM 1170 / LMG 11437 / NCIMB 947 / NCTC 947) (Lactobacillus brevis), this protein is Small ribosomal subunit protein uS12.